The primary structure comprises 415 residues: Gamma-glutamyl phosphate reductase (415 aa).

This sequence belongs to the gamma-glutamyl phosphate reductase family.

It is found in the cytoplasm. The catalysed reaction is L-glutamate 5-semialdehyde + phosphate + NADP(+) = L-glutamyl 5-phosphate + NADPH + H(+). It participates in amino-acid biosynthesis; L-proline biosynthesis; L-glutamate 5-semialdehyde from L-glutamate: step 2/2. Functionally, catalyzes the NADPH-dependent reduction of L-glutamate 5-phosphate into L-glutamate 5-semialdehyde and phosphate. The product spontaneously undergoes cyclization to form 1-pyrroline-5-carboxylate. This chain is Gamma-glutamyl phosphate reductase, found in Leuconostoc citreum (strain KM20).